The sequence spans 409 residues: Glutamate--tRNA ligase 2 (409 aa).

A 'HIGH' region motif is present at residues 9-19 (PSPTGNLHIGG). The 'KMSKS' region signature appears at 198-202 (KLSKR). Lys-201 lines the ATP pocket.

It belongs to the class-I aminoacyl-tRNA synthetase family. Glutamate--tRNA ligase type 1 subfamily. As to quaternary structure, monomer.

The protein localises to the cytoplasm. It carries out the reaction tRNA(Glu) + L-glutamate + ATP = L-glutamyl-tRNA(Glu) + AMP + diphosphate. Its function is as follows. Catalyzes the attachment of glutamate to tRNA(Glu) in a two-step reaction: glutamate is first activated by ATP to form Glu-AMP and then transferred to the acceptor end of tRNA(Glu). The chain is Glutamate--tRNA ligase 2 from Neorickettsia sennetsu (strain ATCC VR-367 / Miyayama) (Ehrlichia sennetsu).